We begin with the raw amino-acid sequence, 41 residues long: Conotoxin Bu22 (41 aa).

Residues 1-25 (SDRASDGRNAAANDRASDLVALTVR) constitute a propeptide that is removed on maturation. 2 disulfide bridges follow: C27–C33 and C28–C40.

The protein belongs to the conotoxin A superfamily. In terms of tissue distribution, expressed by the venom duct.

The protein resides in the secreted. The polypeptide is Conotoxin Bu22 (Conus bullatus (Bubble cone)).